Here is a 285-residue protein sequence, read N- to C-terminus: MGAITLDGKATRDEIFVDLKERVAALTEQGRTPGLGTVLVGDDPGSQAYVRGKHSDCAKVGINSIRRDLPADISQAELDATIDELNANPECTGYIVQLPLPKHLDENAALERIDPGKDADGLHPTNLGRLVLNEPAPLPCTPRGIVHLLRRYEVEIAGAHVVVIGRGVTVGRPLGLLLTRRSENATVTLCHTATRHLPQFTREADIIVAAAGVPHMVTAEMVRPGAAVIDVGVSRDDNGKLVGDVAPDVWEVAGHVSPNPGGVGPLTRAFLLTNVVERAEALARG.

NADP(+) contacts are provided by residues 165–167 (GRG), T192, and V233.

Belongs to the tetrahydrofolate dehydrogenase/cyclohydrolase family. Homodimer.

It carries out the reaction (6R)-5,10-methylene-5,6,7,8-tetrahydrofolate + NADP(+) = (6R)-5,10-methenyltetrahydrofolate + NADPH. The catalysed reaction is (6R)-5,10-methenyltetrahydrofolate + H2O = (6R)-10-formyltetrahydrofolate + H(+). It participates in one-carbon metabolism; tetrahydrofolate interconversion. Catalyzes the oxidation of 5,10-methylenetetrahydrofolate to 5,10-methenyltetrahydrofolate and then the hydrolysis of 5,10-methenyltetrahydrofolate to 10-formyltetrahydrofolate. The protein is Bifunctional protein FolD of Mycobacterium sp. (strain MCS).